The primary structure comprises 188 residues: HTH-type transcriptional regulator QacR (188 aa).

The HTH tetR-type domain maps to 1–61; sequence MNLKDKILGV…EILNIEESKW (61 aa). Positions 24 to 43 form a DNA-binding region, H-T-H motif; it reads TTGEIVKLSESSKGNLYYHF.

In terms of assembly, homodimer. Binds cooperatively to DNA as a pair of dimers.

In terms of biological role, transcriptional repressor of qacA. Binds to IR1, an unusually long 28 bp operator, which is located downstream from the qacA promoter and overlaps its transcription start site. QacR is induced from its IR1 site by binding to one of many structurally dissimilar cationic lipophilic compounds, which are also substrates of QacA. This chain is HTH-type transcriptional regulator QacR (qacR), found in Staphylococcus aureus (strain Mu50 / ATCC 700699).